Reading from the N-terminus, the 311-residue chain is Aspartate carbamoyltransferase catalytic subunit (311 aa).

Residues Arg55 and Thr56 each contribute to the carbamoyl phosphate site. Lys85 contributes to the L-aspartate binding site. Carbamoyl phosphate is bound by residues Arg106, His135, and Gln138. Residues Arg168 and Arg230 each contribute to the L-aspartate site. Carbamoyl phosphate contacts are provided by Leu268 and Pro269.

Belongs to the aspartate/ornithine carbamoyltransferase superfamily. ATCase family. In terms of assembly, heterododecamer (2C3:3R2) of six catalytic PyrB chains organized as two trimers (C3), and six regulatory PyrI chains organized as three dimers (R2).

The enzyme catalyses carbamoyl phosphate + L-aspartate = N-carbamoyl-L-aspartate + phosphate + H(+). It functions in the pathway pyrimidine metabolism; UMP biosynthesis via de novo pathway; (S)-dihydroorotate from bicarbonate: step 2/3. Functionally, catalyzes the condensation of carbamoyl phosphate and aspartate to form carbamoyl aspartate and inorganic phosphate, the committed step in the de novo pyrimidine nucleotide biosynthesis pathway. In Buchnera aphidicola subsp. Schizaphis graminum (strain Sg), this protein is Aspartate carbamoyltransferase catalytic subunit.